Reading from the N-terminus, the 195-residue chain is U8 snoRNA-decapping enzyme (195 aa).

Positions 18 to 173 (GWRHACHALL…IGSAREQLLE (156 aa)) constitute a Nudix hydrolase domain. Substrate-binding residues include H24, R50, and F57. G59, E76, E80, and H99 together coordinate Mn(2+). A Nudix box motif is present at residues 61-82 (FVDTQDRSLEDGLNRELREELG). Position 170 (Q170) interacts with substrate. E173 is a binding site for Mn(2+).

Belongs to the Nudix hydrolase family. NUDT16 subfamily. In terms of assembly, homodimer. Mg(2+) serves as cofactor. Requires Mn(2+) as cofactor. It depends on Co(2+) as a cofactor. As to expression, expressed strongly in lung, kidney, adrenal gland, testis, heart and brain.

The protein resides in the nucleus. It localises to the nucleoplasm. It is found in the nucleolus. The protein localises to the cytoplasm. It catalyses the reaction a 5'-end (N(7)-methyl 5'-triphosphoguanosine)-ribonucleoside in mRNA + H2O = N(7)-methyl-GDP + a 5'-end phospho-ribonucleoside in mRNA + 2 H(+). It carries out the reaction IDP + H2O = IMP + phosphate + H(+). The catalysed reaction is dIDP + H2O = dIMP + phosphate + H(+). The enzyme catalyses a 5'-end NAD(+)-phospho-ribonucleoside in mRNA + H2O = a 5'-end phospho-adenosine-phospho-ribonucleoside in mRNA + beta-nicotinamide D-ribonucleotide + 2 H(+). It catalyses the reaction a 5'-end FAD-phospho-ribonucleoside in mRNA + H2O = a 5'-end phospho-adenosine-phospho-ribonucleoside in mRNA + FMN + 2 H(+). It carries out the reaction a 5'-end CoA-ribonucleoside in mRNA + H2O = a 5'-end phospho-adenosine-phospho-ribonucleoside in mRNA + (R)-4'-phosphopantetheine + 2 H(+). Its activity is regulated as follows. The phosphatase activity is inhibited by the product IMP. RNA-binding and decapping enzyme that catalyzes the cleavage of the cap structure of snoRNAs and mRNAs in a metal-dependent manner. Part of the U8 snoRNP complex that is required for the accumulation of mature 5.8S and 28S rRNA. Has diphosphatase activity and removes m7G and/or m227G caps from U8 snoRNA and leaves a 5'monophosphate on the RNA. Also catalyzes the cleavage of the cap structure on mRNAs. Does not hydrolyze cap analog structures like 7-methylguanosine nucleoside triphosphate (m7GpppG). Also hydrolysis m7G- and m227G U3-capped RNAs but with less efficiencies. Has broad substrate specificity with manganese or cobalt as cofactor and can act on various RNA species. Binds to the U8 snoRNA; metal is not required for RNA-binding. May play a role in the regulation of snoRNAs and mRNAs degradation. Also acts as a phosphatase; hydrolyzes the non-canonical purine nucleotides inosine diphosphate (IDP) and deoxyinosine diphosphate (dITP) as well as guanosine diphosphate (GDP), deoxyguanosine diphosphate (dGDP), xanthine diphosphate (XDP), inosine triphosphate (ITP) and deoxyinosine triphosphate (ITP) to their respective monophosphate derivatives and does not distinguish between the deoxy- and ribose forms. The order of activity with different substrates is IDP &gt; dIDP &gt;&gt; GDP = dGDP &gt; XDP = ITP = dITP. Binds strongly to GTP, ITP and XTP. Participates in the hydrolysis of dIDP/IDP and probably excludes non-canonical purines from RNA and DNA precursor pools, thus preventing their incorporation into RNA and DNA and avoiding chromosomal lesions. Exhibits decapping activity towards NAD-capped RNAs and FAD-capped RNAs. Exhibits decapping activity towards dpCoA-capped RNAs in vitro. The polypeptide is U8 snoRNA-decapping enzyme (NUDT16) (Homo sapiens (Human)).